The sequence spans 1382 residues: Suppressor of organelle fusion 2 (1382 aa).

The 235-residue stretch at 229–463 (RIPLDEATSN…QLFNRPHPIR (235 aa)) folds into the BEACH domain. WD repeat units follow at residues 1094–1133 (GHQE…DEIG) and 1140–1176 (KHTR…LLAQ).

It belongs to the WD repeat WDR81 family. Interacts with sorf-1; the interaction is direct. Interacts with bec-1.

It is found in the early endosome. Its subcellular location is the late endosome. The protein localises to the cytoplasm. Together with sorf-1 negatively regulates the levels of phosphatidylinositol 3-phosphate (PtdIns3P) to enable the conversion of early endosomes to late endosomes. Binds to sorf-1 and the sorf-1-sorf-2 complex likely acts through bec-1, a non-catalytic subunit of phosphatidylinositol 3-kinase (PI3K), to suppress PI3K activity, thereby negatively regulating endosomal PtdIns3P levels. This chain is Suppressor of organelle fusion 2, found in Caenorhabditis elegans.